The sequence spans 310 residues: ADP-L-glycero-D-manno-heptose-6-epimerase (310 aa).

NADP(+) is bound by residues 10–11 (FI), 31–32 (DN), lysine 38, lysine 53, 75–79 (EGACS), and asparagine 92. Catalysis depends on tyrosine 140, which acts as the Proton acceptor. Lysine 144 lines the NADP(+) pocket. Substrate is bound at residue asparagine 169. Residues valine 170 and lysine 178 each coordinate NADP(+). Lysine 178 acts as the Proton acceptor in catalysis. Residues serine 180, histidine 187, 201–204 (FEGS), arginine 209, and tyrosine 272 contribute to the substrate site.

This sequence belongs to the NAD(P)-dependent epimerase/dehydratase family. HldD subfamily. In terms of assembly, homopentamer. Requires NADP(+) as cofactor.

It catalyses the reaction ADP-D-glycero-beta-D-manno-heptose = ADP-L-glycero-beta-D-manno-heptose. The protein operates within nucleotide-sugar biosynthesis; ADP-L-glycero-beta-D-manno-heptose biosynthesis; ADP-L-glycero-beta-D-manno-heptose from D-glycero-beta-D-manno-heptose 7-phosphate: step 4/4. In terms of biological role, catalyzes the interconversion between ADP-D-glycero-beta-D-manno-heptose and ADP-L-glycero-beta-D-manno-heptose via an epimerization at carbon 6 of the heptose. The chain is ADP-L-glycero-D-manno-heptose-6-epimerase from Klebsiella pneumoniae (strain 342).